A 104-amino-acid polypeptide reads, in one-letter code: Pyrimidine/purine nucleoside phosphorylase (104 aa).

This sequence belongs to the nucleoside phosphorylase PpnP family.

The enzyme catalyses a purine D-ribonucleoside + phosphate = a purine nucleobase + alpha-D-ribose 1-phosphate. It carries out the reaction adenosine + phosphate = alpha-D-ribose 1-phosphate + adenine. It catalyses the reaction cytidine + phosphate = cytosine + alpha-D-ribose 1-phosphate. The catalysed reaction is guanosine + phosphate = alpha-D-ribose 1-phosphate + guanine. The enzyme catalyses inosine + phosphate = alpha-D-ribose 1-phosphate + hypoxanthine. It carries out the reaction thymidine + phosphate = 2-deoxy-alpha-D-ribose 1-phosphate + thymine. It catalyses the reaction uridine + phosphate = alpha-D-ribose 1-phosphate + uracil. The catalysed reaction is xanthosine + phosphate = alpha-D-ribose 1-phosphate + xanthine. Catalyzes the phosphorolysis of diverse nucleosides, yielding D-ribose 1-phosphate and the respective free bases. Can use uridine, adenosine, guanosine, cytidine, thymidine, inosine and xanthosine as substrates. Also catalyzes the reverse reactions. This Geotalea uraniireducens (strain Rf4) (Geobacter uraniireducens) protein is Pyrimidine/purine nucleoside phosphorylase.